The following is a 132-amino-acid chain: Small ribosomal subunit protein uS9 (132 aa).

Residues 100-132 (LKSNGLLTRDDRTKERKKPGLKRARKAPQYTKR) are disordered. Residues 114 to 132 (ERKKPGLKRARKAPQYTKR) are compositionally biased toward basic residues.

Belongs to the universal ribosomal protein uS9 family.

The protein is Small ribosomal subunit protein uS9 of Dehalococcoides mccartyi (strain ATCC BAA-2266 / KCTC 15142 / 195) (Dehalococcoides ethenogenes (strain 195)).